The chain runs to 204 residues: ATP synthase subunit 4, mitochondrial (204 aa).

2 helical membrane passes run 27–47 (GILA…LYVV) and 52–72 (ILLV…APLY).

In terms of assembly, F-type ATP synthases have 2 components, the catalytic core F(1) and the membrane-embedded component F(0), linked together by a central stalk and a peripheral stalk. The central stalk, also called rotor shaft, is often seen as part of F(1). The peripheral stalk is seen as part of F(0). F(0) contains the membrane channel next to the rotor. F-type ATP synthases form dimers but each monomer functions independently in ATP generation. The dimer consists of 18 different polypeptides: ATP1 (subunit alpha, part of F(1), 3 molecules per monomer), ATP2 (subunit beta, part of F(1), 3 molecules per monomer), ATP3 (subunit gamma, part of the central stalk), ATP4 (subunit b, part of the peripheral stalk), ATP5/OSCP (subunit 5/OSCP, part of the peripheral stalk), ATP6 (subunit a, part of the peripheral stalk), ATP7 (subunit d, part of the peripheral stalk), ATP8 (subunit 8, part of the peripheral stalk), OLI1 (subunit c, part of the rotor, 10 molecules per monomer), ATP14 (subunit h, part of the peripheral stalk), ATP15 (subunit epsilon, part of the central stalk), ATP16 (subunit delta, part of the central stalk), ATP17 (subunit f, part of the peripheral stalk), ATP18 (subunit i/j, part of the peripheral stalk). Dimer-specific subunits are ATP19 (subunit k, at interface between monomers), ATP20 (subunit g, at interface between monomers), TIM11 (subunit e, at interface between monomers). Also contains subunit L.

It is found in the mitochondrion inner membrane. Its function is as follows. Mitochondrial membrane ATP synthase (F(1)F(0) ATP synthase or Complex V) produces ATP from ADP in the presence of a proton gradient across the membrane which is generated by electron transport complexes of the respiratory chain. F-type ATP synthases consist of two structural domains, F(1) - containing the extramembraneous catalytic core, and F(0) - containing the membrane proton channel, linked together by a central stalk and a peripheral stalk. During catalysis, ATP synthesis in the catalytic domain of F(1) is coupled via a rotary mechanism of the central stalk subunits to proton translocation. Part of the complex F(0) domain and the peripheral stalk, which acts as a stator to hold the catalytic alpha/ATP1(3)beta/ATP2(3) subcomplex and subunit a/ATP6 static relative to the rotary elements. The sequence is that of ATP synthase subunit 4, mitochondrial from Pichia angusta (Yeast).